A 102-amino-acid chain; its full sequence is MNQYDLNLILNPNISAEQVQTEKDYIENAVRNAGAEISNLDDLGNRRLAYQVGKDREGYYLMYTIKASGNPETAIASSLRLRDNVRRVLVVKDRPEWKTKKA.

This sequence belongs to the bacterial ribosomal protein bS6 family.

Binds together with bS18 to 16S ribosomal RNA. The protein is Small ribosomal subunit protein bS6 (rpsF) of Deinococcus radiodurans (strain ATCC 13939 / DSM 20539 / JCM 16871 / CCUG 27074 / LMG 4051 / NBRC 15346 / NCIMB 9279 / VKM B-1422 / R1).